Consider the following 405-residue polypeptide: Phosphopentomutase (405 aa).

6 residues coordinate Mn(2+): Asp-10, Asp-303, His-308, Asp-344, His-345, and His-356.

Belongs to the phosphopentomutase family. Mn(2+) is required as a cofactor.

The protein resides in the cytoplasm. The enzyme catalyses 2-deoxy-alpha-D-ribose 1-phosphate = 2-deoxy-D-ribose 5-phosphate. It carries out the reaction alpha-D-ribose 1-phosphate = D-ribose 5-phosphate. The protein operates within carbohydrate degradation; 2-deoxy-D-ribose 1-phosphate degradation; D-glyceraldehyde 3-phosphate and acetaldehyde from 2-deoxy-alpha-D-ribose 1-phosphate: step 1/2. In terms of biological role, isomerase that catalyzes the conversion of deoxy-ribose 1-phosphate (dRib-1-P) and ribose 1-phosphate (Rib-1-P) to deoxy-ribose 5-phosphate (dRib-5-P) and ribose 5-phosphate (Rib-5-P), respectively. This Shewanella woodyi (strain ATCC 51908 / MS32) protein is Phosphopentomutase.